The primary structure comprises 365 residues: tRNA/tmRNA (uracil-C(5))-methyltransferase (365 aa).

Positions 189, 217, 222, 238, and 298 each coordinate S-adenosyl-L-methionine. Cys-323 functions as the Nucleophile in the catalytic mechanism. The active-site Proton acceptor is the Glu-357.

The protein belongs to the class I-like SAM-binding methyltransferase superfamily. RNA M5U methyltransferase family. TrmA subfamily.

It catalyses the reaction uridine(54) in tRNA + S-adenosyl-L-methionine = 5-methyluridine(54) in tRNA + S-adenosyl-L-homocysteine + H(+). It carries out the reaction uridine(341) in tmRNA + S-adenosyl-L-methionine = 5-methyluridine(341) in tmRNA + S-adenosyl-L-homocysteine + H(+). Functionally, dual-specificity methyltransferase that catalyzes the formation of 5-methyluridine at position 54 (m5U54) in all tRNAs, and that of position 341 (m5U341) in tmRNA (transfer-mRNA). This is tRNA/tmRNA (uracil-C(5))-methyltransferase from Shewanella piezotolerans (strain WP3 / JCM 13877).